We begin with the raw amino-acid sequence, 618 residues long: UvrABC system protein C (618 aa).

In terms of domain architecture, GIY-YIG spans 19 to 97 (SEPGIYRMLD…IKALRPKYNV (79 aa)). Residues 208–243 (QIILDALAERMKQAVNQLNFEEAAVLRDQIKNLRLI) enclose the UVR domain.

This sequence belongs to the UvrC family. As to quaternary structure, interacts with UvrB in an incision complex.

The protein localises to the cytoplasm. In terms of biological role, the UvrABC repair system catalyzes the recognition and processing of DNA lesions. UvrC both incises the 5' and 3' sides of the lesion. The N-terminal half is responsible for the 3' incision and the C-terminal half is responsible for the 5' incision. This Legionella pneumophila (strain Paris) protein is UvrABC system protein C.